The sequence spans 573 residues: Urease subunit alpha 2 (573 aa).

The 439-residue stretch at 135–573 folds into the Urease domain; the sequence is GGMDTHVHYI…ISLNQLYFFS (439 aa). H140, H142, and K223 together coordinate Ni(2+). K223 carries the post-translational modification N6-carboxylysine. Position 225 (H225) interacts with substrate. Ni(2+) contacts are provided by H252 and H278. H326 serves as the catalytic Proton donor. Residue D366 participates in Ni(2+) binding.

Belongs to the metallo-dependent hydrolases superfamily. Urease alpha subunit family. In terms of assembly, heterotrimer of UreA (gamma), UreB (beta) and UreC (alpha) subunits. Three heterotrimers associate to form the active enzyme. The cofactor is Ni cation. In terms of processing, carboxylation allows a single lysine to coordinate two nickel ions.

The protein resides in the cytoplasm. It catalyses the reaction urea + 2 H2O + H(+) = hydrogencarbonate + 2 NH4(+). It participates in nitrogen metabolism; urea degradation; CO(2) and NH(3) from urea (urease route): step 1/1. Disrupting the ure2 operon has no effect on urease activity or pathogen survival in BALB/c mice when administered orally. The protein is Urease subunit alpha 2 of Brucella abortus (strain 2308).